The sequence spans 565 residues: Sodium/hydrogen exchanger 9B1 (565 aa).

Basic and acidic residues-rich tracts occupy residues 1 to 14 and 23 to 86; these read MSEHDVESNKKDDG and MSKD…ETQT. Positions 1 to 112 are disordered; the sequence is MSEHDVESNK…RGTNSYCPPQ (112 aa). 13 helical membrane passes run 122–142, 146–166, 167–187, 206–223, 238–258, 266–286, 311–331, 341–361, 371–391, 419–439, 449–469, 482–502, and 523–543; these read GAALIALWTLLWALIGQEVLP, LFGLVVIFYSAFLGGKILEFI, KIPVVPPLPPLIGMLLAGFTI, ALRNTALTIILVRAGLGL, LSFGPCFLEACSAALFSHFIM, FLLGFVLGAVSPAVVVPNMLM, IVAITGFNTFLSIVFSSGSVI, VLIGVLVGIVMGVFVQYFPSG, AFLVLSMCISAVLGCQHIGLH, IVANTWNVFQPLLFGLVGTEV, IGMCLATLGLALSVRILSTFV, VFIALSWIPKATVQAVLGPLA, and VAFLAILITAPNGALLIGILG.

Belongs to the monovalent cation:proton antiporter 1 (CPA1) transporter (TC 2.A.36) family. Testis-specific. Expressed in the spermatids and spermatozoa (at protein level). Specifically present in the principal piece of sperm tail (at protein level).

The protein localises to the cell projection. Its subcellular location is the cilium. It is found in the flagellum membrane. Its function is as follows. Sperm-specific Na(+)/H(+) exchanger involved in intracellular pH regulation of spermatozoa. Involved in sperm motility and fertility. The chain is Sodium/hydrogen exchanger 9B1 from Mus musculus (Mouse).